The following is a 176-amino-acid chain: Superoxide oxidase CybB (176 aa).

Residues Met-1–Arg-7 are Cytoplasmic-facing. Residues Leu-8 to Phe-29 form a helical membrane-spanning segment. His-13 serves as a coordination point for heme b. The Periplasmic segment spans residues Arg-30 to Pro-39. A helical membrane pass occupies residues Leu-40–Leu-64. Residue His-45 coordinates heme b. Residues Lys-65–Pro-77 lie on the Cytoplasmic side of the membrane. Residues Met-78–Val-103 traverse the membrane as a helical segment. Residues Met-104–Ser-135 lie on the Periplasmic side of the membrane. The helical transmembrane segment at Trp-136 to His-158 threads the bilayer. Heme b is bound by residues His-137 and His-151. The Cytoplasmic segment spans residues His-159–Ser-176.

Belongs to the cytochrome b561 family. As to quaternary structure, monomer. Heme b serves as cofactor.

The protein localises to the cell inner membrane. It carries out the reaction a ubiquinol + 2 O2 = 2 superoxide + a ubiquinone + 2 H(+). It catalyses the reaction a menaquinol + 2 O2 = 2 superoxide + a menaquinone + 2 H(+). Its activity is regulated as follows. Quinone binding to the enzyme accelerates the reaction with superoxide. Its function is as follows. B-type di-heme cytochrome. Catalyzes the oxidation of superoxide to molecular oxygen and transfers the extracted electrons to ubiquinone through the two hemes. Can also use menaquinone. The enzyme may be responsible for the detoxification of the superoxide anion produced in the membrane or at its surface. However, it can also efficiently catalyze the formation of superoxide from ubiquinol under physiological conditions. The chain is Superoxide oxidase CybB from Escherichia coli (strain K12).